A 556-amino-acid chain; its full sequence is DNA ligase (556 aa).

Residue Glu-245 coordinates ATP. Catalysis depends on Lys-247, which acts as the N6-AMP-lysine intermediate. Arg-252, Arg-267, Glu-296, Phe-336, Arg-408, and Lys-414 together coordinate ATP.

It belongs to the ATP-dependent DNA ligase family. The cofactor is Mg(2+).

The enzyme catalyses ATP + (deoxyribonucleotide)n-3'-hydroxyl + 5'-phospho-(deoxyribonucleotide)m = (deoxyribonucleotide)n+m + AMP + diphosphate.. Functionally, DNA ligase that seals nicks in double-stranded DNA during DNA replication, DNA recombination and DNA repair. This is DNA ligase from Methanosphaerula palustris (strain ATCC BAA-1556 / DSM 19958 / E1-9c).